The primary structure comprises 429 residues: Phosphoribosylamine--glycine ligase (429 aa).

The ATP-grasp domain maps to 109 to 316 (KDFLARHQIP…LVDLCLAACD (208 aa)). ATP is bound at residue 135–196 (LREKGAPIVI…EEFLDGEEAS (62 aa)). Glu286 and Asn288 together coordinate Mg(2+).

The protein belongs to the GARS family. In terms of assembly, monomer. Mg(2+) serves as cofactor. It depends on Mn(2+) as a cofactor.

The catalysed reaction is 5-phospho-beta-D-ribosylamine + glycine + ATP = N(1)-(5-phospho-beta-D-ribosyl)glycinamide + ADP + phosphate + H(+). The protein operates within purine metabolism; IMP biosynthesis via de novo pathway; N(1)-(5-phospho-D-ribosyl)glycinamide from 5-phospho-alpha-D-ribose 1-diphosphate: step 2/2. The sequence is that of Phosphoribosylamine--glycine ligase from Salmonella typhi.